A 133-amino-acid polypeptide reads, in one-letter code: Small ribosomal subunit protein uS11 (133 aa).

The protein belongs to the universal ribosomal protein uS11 family. Part of the 30S ribosomal subunit. Interacts with proteins S7 and S18. Binds to IF-3.

In terms of biological role, located on the platform of the 30S subunit, it bridges several disparate RNA helices of the 16S rRNA. Forms part of the Shine-Dalgarno cleft in the 70S ribosome. The sequence is that of Small ribosomal subunit protein uS11 from Bordetella petrii (strain ATCC BAA-461 / DSM 12804 / CCUG 43448).